Here is a 61-residue protein sequence, read N- to C-terminus: Large ribosomal subunit protein bL32 (61 aa).

Basic residues predominate over residues 1-10 (MAQPKKKTSN). The segment at 1–23 (MAQPKKKTSNAKRDQRRATWKRK) is disordered.

This sequence belongs to the bacterial ribosomal protein bL32 family.

This chain is Large ribosomal subunit protein bL32, found in Gloeobacter violaceus (strain ATCC 29082 / PCC 7421).